The chain runs to 526 residues: Rho guanine nucleotide exchange factor 3 (526 aa).

Residues 20–40 (ELPPASGPAKDAEEPSNKRVK) form a disordered region. Phosphoserine is present on residues S47 and S70. The DH domain maps to 122–304 (KRQEAIFELS…QGIVAEINTK (183 aa)). The PH domain maps to 291 to 449 (INIIQGIVAE…WLNCIRQAKE (159 aa)). Positions 464 to 526 (EGSFLNPTTG…GNSRHGESNV (63 aa)) are disordered. Residues 466–475 (SFLNPTTGSR) are compositionally biased toward polar residues.

As to quaternary structure, interacts with RHOA and RHOB.

The protein localises to the cytoplasm. Functionally, acts as a guanine nucleotide exchange factor (GEF) for RhoA and RhoB GTPases. This is Rho guanine nucleotide exchange factor 3 (ARHGEF3) from Pongo abelii (Sumatran orangutan).